The chain runs to 245 residues: NADH-quinone oxidoreductase subunit C (245 aa).

Over residues 1-10 the composition is skewed to basic and acidic residues; it reads MNAPQDRTDD. Disordered regions lie at residues 1 to 54 and 217 to 245; these read MNAP…GYGG and QRKD…RSYQ. The span at 11–28 shows a compositional bias: low complexity; that stretch reads GGVPVPVTPAGATGGAPA. The span at 39 to 54 shows a compositional bias: gly residues; sequence GMFGDQGTGDVSGYGG.

This sequence belongs to the complex I 30 kDa subunit family. As to quaternary structure, NDH-1 is composed of 14 different subunits. Subunits NuoB, C, D, E, F, and G constitute the peripheral sector of the complex.

It localises to the cell membrane. The catalysed reaction is a quinone + NADH + 5 H(+)(in) = a quinol + NAD(+) + 4 H(+)(out). Functionally, NDH-1 shuttles electrons from NADH, via FMN and iron-sulfur (Fe-S) centers, to quinones in the respiratory chain. The immediate electron acceptor for the enzyme in this species is believed to be a menaquinone. Couples the redox reaction to proton translocation (for every two electrons transferred, four hydrogen ions are translocated across the cytoplasmic membrane), and thus conserves the redox energy in a proton gradient. In Salinispora arenicola (strain CNS-205), this protein is NADH-quinone oxidoreductase subunit C.